The following is a 189-amino-acid chain: Glycerol-3-phosphate acyltransferase (189 aa).

5 consecutive transmembrane segments (helical) span residues 1–21 (MFWL…AIVL), 50–70 (KLAI…VLLA), 77–97 (LHAQ…PLYF), 111–131 (MLMG…LLTF), and 151–171 (LLAW…VMIV).

Belongs to the PlsY family. Probably interacts with PlsX.

Its subcellular location is the cell inner membrane. It catalyses the reaction an acyl phosphate + sn-glycerol 3-phosphate = a 1-acyl-sn-glycero-3-phosphate + phosphate. Its pathway is lipid metabolism; phospholipid metabolism. In terms of biological role, catalyzes the transfer of an acyl group from acyl-phosphate (acyl-PO(4)) to glycerol-3-phosphate (G3P) to form lysophosphatidic acid (LPA). This enzyme utilizes acyl-phosphate as fatty acyl donor, but not acyl-CoA or acyl-ACP. The protein is Glycerol-3-phosphate acyltransferase of Pseudomonas putida (strain ATCC 700007 / DSM 6899 / JCM 31910 / BCRC 17059 / LMG 24140 / F1).